A 330-amino-acid polypeptide reads, in one-letter code: tRNA U34 carboxymethyltransferase (330 aa).

Residues Lys91, Trp105, Lys110, Gly130, 152–154 (DPS), 181–182 (IE), Met196, Tyr200, and Arg315 contribute to the carboxy-S-adenosyl-L-methionine site.

The protein belongs to the class I-like SAM-binding methyltransferase superfamily. CmoB family. In terms of assembly, homotetramer.

The catalysed reaction is carboxy-S-adenosyl-L-methionine + 5-hydroxyuridine(34) in tRNA = 5-carboxymethoxyuridine(34) in tRNA + S-adenosyl-L-homocysteine + H(+). Catalyzes carboxymethyl transfer from carboxy-S-adenosyl-L-methionine (Cx-SAM) to 5-hydroxyuridine (ho5U) to form 5-carboxymethoxyuridine (cmo5U) at position 34 in tRNAs. The polypeptide is tRNA U34 carboxymethyltransferase (Shewanella sp. (strain ANA-3)).